Here is a 290-residue protein sequence, read N- to C-terminus: Multiple sugar-binding transport system permease protein MsmF (290 aa).

A run of 7 helical transmembrane segments spans residues 12–32, 72–92, 104–124, 156–176, 201–221, 231–253, and 260–280; these read GWTF…FPMF, FTLV…IIIA, FFRA…SLIF, VIAS…ILFL, FWSV…IMAL, IFAL…VYNY, and YGYA…VSVL. An ABC transmembrane type-1 domain is found at 70 to 281; that stretch reads IGFTLVLTLA…IIIGIVSVLQ (212 aa).

This sequence belongs to the binding-protein-dependent transport system permease family. MalFG subfamily.

Its subcellular location is the cell membrane. Functionally, involved in a binding protein-dependent transport system responsible for the uptake of melibiose, raffinose and isomaltotriose. The chain is Multiple sugar-binding transport system permease protein MsmF (msmF) from Streptococcus mutans serotype c (strain ATCC 700610 / UA159).